The primary structure comprises 88 residues: Translation initiation factor IF-1 1 (88 aa).

The 72-residue stretch at 1–72 (MAKEELIELD…TKGRINFRHK (72 aa)) folds into the S1-like domain.

It belongs to the IF-1 family. In terms of assembly, component of the 30S ribosomal translation pre-initiation complex which assembles on the 30S ribosome in the order IF-2 and IF-3, IF-1 and N-formylmethionyl-tRNA(fMet); mRNA recruitment can occur at any time during PIC assembly.

The protein localises to the cytoplasm. Its function is as follows. One of the essential components for the initiation of protein synthesis. Stabilizes the binding of IF-2 and IF-3 on the 30S subunit to which N-formylmethionyl-tRNA(fMet) subsequently binds. Helps modulate mRNA selection, yielding the 30S pre-initiation complex (PIC). Upon addition of the 50S ribosomal subunit IF-1, IF-2 and IF-3 are released leaving the mature 70S translation initiation complex. This chain is Translation initiation factor IF-1 1, found in Burkholderia mallei (strain ATCC 23344).